A 214-amino-acid polypeptide reads, in one-letter code: Ras-like protein 2 (214 aa).

GTP-binding positions include Gly19 to Cys24, Val35 to Thr41, Ala65 to Gly66, Asn122 to Asp125, and Ser152 to Lys154. The Effector region motif lies at Tyr38–Tyr46. A disordered region spans residues Gln178–Glu197. Cys211 is modified (cysteine methyl ester). Cys211 carries the S-farnesyl cysteine lipid modification. The propeptide at Val212–Met214 is removed in mature form.

Belongs to the small GTPase superfamily. Ras family. As to quaternary structure, interacts with farnesyltransferase beta subunit RAM1.

The protein localises to the cell membrane. Its activity is regulated as follows. Alternates between an inactive form bound to GDP and an active form bound to GTP. Activated by a guanine nucleotide-exchange factor (GEF) and inactivated by a GTPase-activating protein (GAP). In terms of biological role, modulates the activity of the adenylate cyclase catalytic subunit and therefore affects the biosynthesis of cyclic-AMP. Plays a role in both surface attachment and surface recognition of appressoria, a highly specialized infection structure for plant penetration. Regulates appressorium formation by coordinated regulation of cAMP signaling and Pmk1 MAPK pathways. This chain is Ras-like protein 2, found in Pyricularia oryzae (strain 70-15 / ATCC MYA-4617 / FGSC 8958) (Rice blast fungus).